The following is a 2139-amino-acid chain: MVNENTRMYVPEENHQGSNYGSPRPAHANMNANAAAGLAPEHIPTPGAALSWQAAIDAARQAKLMGSAGNATISTVSSTQRKRQQYGKPKKQGGTTATRPPRALLCLTLKNPIRRACISIVEWKPFEIIILLTIFANCVALAIYIPFPEDDSNATNSNLERVEYLFLIIFTVEAFLKVIAYGLLFHPNAYLRNGWNLLDFIIVVVGLFSAILEQATKADGANALGGKGAGFDVKALRAFRVLRPLRLVSGVPSLQVVLNSIIKAMVPLLHIALLVLFVIIIYAIIGLELFMGKMHKTCYNQEGIIDVPAEEDPSPCALETGHGRQCQNGTVCKPGWDGPKHGITNFDNFAFAMLTVFQCITMEGWTDVLYWMQDAMGYELPWVYFVSLVIFGSFFVLNLVLGVLSGEFSKEREKAKARGDFQKLREKQQLEEDLKGYLDWITQAEDIDPENEDEGMDEDKPRNMSMPTSETESVNTENVAGGDIEGENCGARLAHRISKSKFSRYWRRWNRFCRRKCRAAVKSNVFYWLVIFLVFLNTLTIASEHYNQPHWLTEVQDTANKALLALFTAEMLLKMYSLGLQAYFVSLFNRFDCFIVCGGILETILVETKIMSPLGISVLRCVRLLRIFKITRYWNSLSNLVASLLNSVRSIASLLLLLFLFIIIFSLLGMQLFGGKFNFDEMQTRRSTFDNFPQSLLTVFQILTGEDWNSVMYDGIMAYGGPSFPGMLVCIYFIILFICGNYILLNVFLAIAVDNLADAESLTSAQKEEEEEKERKKLARTASPEKKQEVMEKPAVEESKEEKIELKSITADGESPPTTKINMDDLQPSENEDKSPHSNPDTAGEEDEEEPEMPVGPRPRPLSELHLKEKAVPMPEASAFFIFSPNNRFRLQCHRIVNDTIFTNLILFFILLSSISLAAEDPVQHTSFRNHILGNADYVFTSIFTLEIILKMTAYGAFLHKGSFCRNYFNILDLLVVSVSLISFGIQSSAINVVKILRVLRVLRPLRAINRAKGLKHVVQCVFVAIRTIGNIVIVTTLLQFMFACIGVQLFKGKLYTCSDSSKQTEAECKGNYITYKDGEVDHPIIQPRSWENSKFDFDNVLAAMMALFTVSTFEGWPELLYRSIDSHTEDKGPIYNYRVEISIFFIIYIIIIAFFMMNIFVGFVIVTFQEQGEQEYKNCELDKNQRQCVEYALKARPLRRYIPKNQHQYKVWYVVNSTYFEYLMFVLILLNTICLAMQHYGQSCLFKIAMNILNMLFTGLFTVEMILKLIAFKPKGYFSDPWNVFDFLIVIGSIIDVILSETNPAEHTQCSPSMSAEENSRISITFFRLFRVMRLVKLLSRGEGIRTLLWTFIKSFQALPYVALLIVMLFFIYAVIGMQVFGKIALNDTTEINRNNNFQTFPQAVLLLFRCATGEAWQDIMLACMPGKKCAPESEPSNSTEGETPCGSSFAVFYFISFYMLCAFLIINLFVAVIMDNFDYLTRDWSILGPHHLDEFKRIWAEYDPEAKGRIKHLDVVTLLRRIQPPLGFGKLCPHRVACKRLVSMNMPLNSDGTVMFNATLFALVRTALRIKTEGNLEQANEELRAIIKKIWKRTSMKLLDQVVPPAGDDEVTVGKFYATFLIQEYFRKFKKRKEQGLVGKPSQRNALSLQAGLRTLHDIGPEIRRAISGDLTAEEELDKAMKEAVSAASEDDIFRRAGGLFGNHVTYYQSDSRGNFPQTFATQRPLHINKTGNNQADTESPSHEKLVDSTFTPSSYSSTGSNANINNANNTALGRFPHPAGYSSTVSTVEGHGPPLSPAVRVQEAAWKLSSKRCHSRESQGATVNQEIFPDETRSVRMSEEAEYCSEPSLLSTDMFSYQEDEHRQLTCPEEDKREIQPSPKRSFLRSASLGRRASFHLECLKRQKDQGGDISQKTALPLHLVHHQALAVAGLSPLLQRSHSPTTFPRPCPTPPVTPGSRGRPLRPIPTLRLEGAESSEKLNSSFPSIHCSSWSEETTACSGSSSMARRARPVSLTVPSQAGAPGRQFHGSASSLVEAVLISEGLGQFAQDPKFIEVTTQELADACDMTIEEMENAADNILSGGAQQSPNGTLLPFVNCRDPGQDRAVAPEDESCAYALGRGRSEEALADSRSYVSNL.

The tract at residues methionine 1–tyrosine 20 is disordered. The Cytoplasmic segment spans residues methionine 1 to lysine 124. A calmodulin-binding region spans residues glycine 47–alanine 68. The tract at residues isoleucine 73–threonine 98 is disordered. Basic residues predominate over residues glutamine 80–lysine 91. The I repeat unit spans residues asparagine 111–phenylalanine 408. A helical membrane pass occupies residues proline 125 to isoleucine 143. The Extracellular portion of the chain corresponds to tyrosine 144 to asparagine 158. N-linked (GlcNAc...) asparagine glycosylation is present at asparagine 153. The helical transmembrane segment at leucine 159–isoleucine 179 threads the bilayer. Topologically, residues alanine 180–asparagine 188 are cytoplasmic. The helical transmembrane segment at alanine 189 to serine 209 threads the bilayer. Topologically, residues alanine 210–aspartate 232 are extracellular. A helical transmembrane segment spans residues valine 233–valine 251. At proline 252–leucine 268 the chain is on the cytoplasmic side. The chain crosses the membrane as a helical span at residues leucine 269–phenylalanine 290. Over methionine 291–alanine 350 the chain is Extracellular. 2 disulfides stabilise this stretch: cysteine 298–cysteine 326 and cysteine 316–cysteine 332. Asparagine 328 carries N-linked (GlcNAc...) asparagine glycosylation. The pore-forming intramembrane region spans phenylalanine 351 to methionine 372. A Selectivity filter of repeat I motif is present at residues threonine 361–glycine 364. Glutamate 363 is a Ca(2+) binding site. Residues glutamine 373–leucine 380 are Extracellular-facing. The helical transmembrane segment at proline 381–leucine 401 threads the bilayer. Residues glycine 402–asparagine 524 lie on the Cytoplasmic side of the membrane. An AID/alpha-interaction domain; mediates interaction with the beta subunit region spans residues glutamine 428–glutamate 445. Positions proline 449–glycine 481 are disordered. Residues serine 465–asparagine 478 show a composition bias toward polar residues. Position 469 is a phosphoserine (serine 469). Phosphothreonine is present on threonine 476. Residues asparagine 510–leucine 756 form an II repeat. A helical membrane pass occupies residues valine 525–serine 543. Topologically, residues glutamate 544–glutamate 554 are extracellular. A helical transmembrane segment spans residues valine 555–methionine 575. At tyrosine 576–serine 586 the chain is on the cytoplasmic side. Residues leucine 587–valine 606 form a helical membrane-spanning segment. At glutamate 607–glycine 615 the chain is on the extracellular side. Residues isoleucine 616–tryptophan 634 form a helical membrane-spanning segment. The Cytoplasmic portion of the chain corresponds to asparagine 635–serine 653. Residues leucine 654–phenylalanine 673 traverse the membrane as a helical segment. Topologically, residues glycine 674–proline 693 are extracellular. An intramembrane region (pore-forming) is located at residues glutamine 694–glycine 715. Positions threonine 704–aspartate 707 match the Selectivity filter of repeat II motif. Residue glutamate 706 participates in Ca(2+) binding. The Extracellular portion of the chain corresponds to isoleucine 716–proline 725. A helical transmembrane segment spans residues glycine 726–leucine 745. Residues asparagine 746–threonine 900 lie on the Cytoplasmic side of the membrane. Positions serine 764–proline 861 are disordered. Over residues serine 783–leucine 806 the composition is skewed to basic and acidic residues. 2 positions are modified to phosphoserine: serine 808 and serine 815. An interaction with STAC2 region spans residues serine 829–glutamate 876. A compositionally biased stretch (acidic residues) spans alanine 843–glutamate 852. The III repeat unit spans residues asparagine 887 to phenylalanine 1169. Residues isoleucine 901–alanine 919 traverse the membrane as a helical segment. Over glutamate 920–histidine 931 the chain is Extracellular. The chain crosses the membrane as a helical span at residues isoleucine 932 to lysine 951. The Cytoplasmic segment spans residues methionine 952–asparagine 967. Residues tyrosine 968 to isoleucine 986 traverse the membrane as a helical segment. Residues glutamine 987–valine 993 are Extracellular-facing. The chain crosses the membrane as a helical span at residues valine 994–alanine 1012. Over lysine 1013 to asparagine 1031 the chain is Cytoplasmic. A helical membrane pass occupies residues isoleucine 1032–phenylalanine 1051. Topologically, residues lysine 1052–valine 1101 are extracellular. Cysteines 1058 and 1069 form a disulfide. The dihydropyridine binding stretch occupies residues arginine 1089–lysine 1178. The segment at residues leucine 1102–tyrosine 1122 is an intramembrane region (pore-forming). Residues threonine 1113–glycine 1116 carry the Selectivity filter of repeat III motif. Glutamate 1115 is a binding site for Ca(2+). Residues arginine 1123 to arginine 1139 lie on the Extracellular side of the membrane. Residues valine 1140 to phenylalanine 1161 form a helical membrane-spanning segment. Over valine 1162 to threonine 1219 the chain is Cytoplasmic. Residues asparagine 1206–phenylalanine 1479 form an IV repeat. Residues tyrosine 1220 to tyrosine 1241 traverse the membrane as a helical segment. Topologically, residues glycine 1242–isoleucine 1249 are extracellular. The chain crosses the membrane as a helical span at residues alanine 1250–isoleucine 1271. At alanine 1272–aspartate 1281 the chain is on the cytoplasmic side. The chain crosses the membrane as a helical span at residues proline 1282–serine 1301. Residues glutamate 1302 to serine 1324 are Extracellular-facing. The chain crosses the membrane as a helical span at residues isoleucine 1325 to glycine 1343. Residues glutamate 1344–proline 1361 lie on the Cytoplasmic side of the membrane. A helical membrane pass occupies residues tyrosine 1362–phenylalanine 1382. The Extracellular portion of the chain corresponds to glycine 1383–glutamine 1404. Asparagine 1388 is a glycosylation site (N-linked (GlcNAc...) asparagine). Positions alanine 1405–leucine 1423 form an intramembrane region, pore-forming. The short motif at threonine 1414–alanine 1417 is the Selectivity filter of repeat IV element. At alanine 1424–phenylalanine 1451 the chain is on the extracellular side. The segment at lysine 1430–lysine 1498 is dihydropyridine binding. Cysteine 1431 and cysteine 1447 are oxidised to a cystine. N-linked (GlcNAc...) asparagine glycosylation is present at asparagine 1439. The interval glutamate 1444–tryptophan 1486 is phenylalkylamine binding. Residues alanine 1452–methionine 1476 traverse the membrane as a helical segment. Over aspartate 1477 to leucine 2139 the chain is Cytoplasmic. The interval aspartate 1611–glycine 1638 is important for interaction with STAC1, STAC2 and STAC3. The calmodulin-binding stretch occupies residues aspartate 1611 to serine 1644. The calmodulin-binding IQ region stretch occupies residues lysine 1617–glutamine 1637. Positions leucine 1651–serine 1670 are important for localization in at the junctional membrane. Residues serine 1670 and serine 1691 each carry the phosphoserine modification. 2 stretches are compositionally biased toward polar residues: residues lysine 1732–glutamate 1741 and serine 1751–serine 1763. Residues lysine 1732–threonine 1773 form a disordered region. Low complexity predominate over residues asparagine 1764–threonine 1773. Serine 1897 carries the post-translational modification Phosphoserine; by PKA. Positions arginine 1940–arginine 1966 are disordered. The segment covering phenylalanine 1947–threonine 1957 has biased composition (pro residues).

The protein belongs to the calcium channel alpha-1 subunit (TC 1.A.1.11) family. CACNA1C subfamily. In terms of assembly, component of a calcium channel complex consisting of a pore-forming alpha subunit (CACNA1C) and ancillary beta, gamma and delta subunits. The channel complex contains alpha, beta, gamma and delta subunits in a 1:1:1:1 ratio, i.e. it contains only one of each type of subunit. CACNA1C channel activity is modulated by ancillary subunits, such as CACNB1, CACNB2, CACNB3, CACNA2D1 and CACNA2D4. Interacts with the gamma subunits CACNG4, CACNG6, CACNG7 and CACNG8. Interacts with CACNB1. Interacts with CACNB2. Identified in a complex with CACNA2D4 and CACNB3. Interacts with CACNB3. Interacts with CACNA2D1. Interacts with CACNA2D4. Interacts with CALM1. Interacts (via the N-terminus and the C-terminal C and IQ motifs) with CABP1; this inhibits Ca(2+)-dependent channel inactivation. The binding via the C motif is calcium independent whereas the binding via IQ requires the presence of calcium and is mutually exclusive with calmodulin binding. The binding to the cytoplasmic N-terminal domain is calcium independent but is essential for the channel modulation. Interacts (via C-terminal CDB motif) with CABP5; in a calcium-dependent manner. Interacts with CIB1; the interaction increases upon cardiomyocytes hypertrophy. Interacts with STAC2 and STAC3; this inhibits channel inactivation. In terms of processing, phosphorylation by PKA at Ser-1897 activates the channel. Elevated levels of blood glucose lead to increased phosphorylation by PKA. In terms of tissue distribution, detected in embryonic heart. Detected in retina in rod bipolar cells. Detected in tibialis artery (at protein level). Detected in smooth muscle cells from tibialis artery and in mesenteric artery. High expression in heart, followed by brain and spinal cord.

It localises to the cell membrane. The protein resides in the sarcolemma. It is found in the perikaryon. Its subcellular location is the postsynaptic density membrane. The protein localises to the cell projection. It localises to the dendrite. The protein resides in the T-tubule. It carries out the reaction Ca(2+)(in) = Ca(2+)(out). With respect to regulation, inhibited by dihydropyridines (DHP), such as isradipine. Inhibited by nifedipine. Channel activity is regulated by Ca(2+) and calmodulin. Binding of STAC1, STAC2 or STAC3 to a region that overlaps with the calmodulin binding site inhibits channel inactivation by Ca(2+) and calmodulin. Binding of calmodulin or CABP1 at the same regulatory sites results in opposite effects on the channel function. Shear stress and pressure increases calcium channel activity. Pore-forming, alpha-1C subunit of the voltage-gated calcium channel that gives rise to L-type calcium currents. Mediates influx of calcium ions into the cytoplasm, and thereby triggers calcium release from the sarcoplasm. Plays an important role in excitation-contraction coupling in the heart. Required for normal heart development and normal regulation of heart rhythm. Required for normal contraction of smooth muscle cells in blood vessels and in the intestine. Essential for normal blood pressure regulation via its role in the contraction of arterial smooth muscle cells. Long-lasting (L-type) calcium channels belong to the 'high-voltage activated' (HVA) group. This is Voltage-dependent L-type calcium channel subunit alpha-1C (Cacna1c) from Mus musculus (Mouse).